A 262-amino-acid polypeptide reads, in one-letter code: ELL-associated factor 2 (262 aa).

The necessary for interaction with ELL stretch occupies residues 17–104 (LKLGESFEKQ…TGECRLEKLS (88 aa)). 3 positions are modified to phosphoserine: S146, S151, and S154. Residues 170-237 (MDQMSSCDSS…EADATCHRLQ (68 aa)) form a disordered region. The span at 174–192 (SSCDSSSDSKSSSSSSSED) shows a compositional bias: low complexity. A necessary for transactivation activity region spans residues 177–262 (DSSSDSKSSS…LSESESDSED (86 aa)). Acidic residues predominate over residues 193–202 (SSSDSEDDDQ). A compositionally biased stretch (basic and acidic residues) spans 227–237 (SEADATCHRLQ). The necessary for interaction with TCEA1 and transactivation activity stretch occupies residues 248–262 (RSDLQLSESESDSED).

The protein belongs to the EAF family. Component of the super elongation complex (SEC), at least composed of EAF1, EAF2, CDK9, MLLT3/AF9, AFF (AFF1 or AFF4), the P-TEFb complex and ELL (ELL, ELL2 or ELL3). Interacts with ELL and ELL2. Isoform 1 and isoform 2 interact with TCEA1. In terms of tissue distribution, isoform 1 is expressed in ovary, uterus, mammary glands, brain, spleen, liver, lung, thymus, kidney, skeletal muscle, skin and testis. Isoform 2 is expressed in kidney.

The protein resides in the nucleus speckle. Functionally, acts as a transcriptional transactivator of ELL and ELL2 elongation activities. Acts as a transcriptional transactivator of TCEA1 elongation activity. This is ELL-associated factor 2 (Eaf2) from Mus musculus (Mouse).